Reading from the N-terminus, the 346-residue chain is Biotin synthase (346 aa).

Residues 38–256 enclose the Radical SAM core domain; it reads RQVQVSTLLS…IAVARIMMPT (219 aa). Cysteine 53, cysteine 57, and cysteine 60 together coordinate [4Fe-4S] cluster. Positions 97, 128, 188, and 260 each coordinate [2Fe-2S] cluster.

It belongs to the radical SAM superfamily. Biotin synthase family. As to quaternary structure, homodimer. The cofactor is [4Fe-4S] cluster. [2Fe-2S] cluster is required as a cofactor.

The enzyme catalyses (4R,5S)-dethiobiotin + (sulfur carrier)-SH + 2 reduced [2Fe-2S]-[ferredoxin] + 2 S-adenosyl-L-methionine = (sulfur carrier)-H + biotin + 2 5'-deoxyadenosine + 2 L-methionine + 2 oxidized [2Fe-2S]-[ferredoxin]. The protein operates within cofactor biosynthesis; biotin biosynthesis; biotin from 7,8-diaminononanoate: step 2/2. Functionally, catalyzes the conversion of dethiobiotin (DTB) to biotin by the insertion of a sulfur atom into dethiobiotin via a radical-based mechanism. This Escherichia coli O6:H1 (strain CFT073 / ATCC 700928 / UPEC) protein is Biotin synthase.